A 214-amino-acid polypeptide reads, in one-letter code: External core antigen (214 aa).

The signal sequence occupies residues 1–19; that stretch reads MQLFHLCLIISCTCPTIQA. Residues 25-27 are HBEAG; sequence GWL. The interval 165–214 is disordered; it reads NAPILSTLPETTVVRRRDRGRSPRRRTPSPRRRRSQSPRRRRSQSRESQC. Basic residues predominate over residues 178-207; the sequence is VRRRDRGRSPRRRTPSPRRRRSQSPRRRRS. The 1; half-length repeat unit spans residues 186-192; the sequence is SPRRRTP. Positions 186 to 208 are 3 X 8 AA repeats of S-P-R-R-R-R-S-Q; it reads SPRRRTPSPRRRRSQSPRRRRSQ. Residues 186–214 constitute a propeptide that is removed on maturation; it reads SPRRRTPSPRRRRSQSPRRRRSQSRESQC. 2 consecutive repeat copies span residues 193–200 and 201–208.

The protein belongs to the orthohepadnavirus precore antigen family. Homodimerizes. Phosphorylated. Post-translationally, cleaved by host furin.

The protein resides in the secreted. Its subcellular location is the host nucleus. May regulate immune response to the intracellular capsid in acting as a T-cell tolerogen, by having an immunoregulatory effect which prevents destruction of infected cells by cytotoxic T-cells. This immune regulation may predispose to chronicity during perinatal infections and prevent severe liver injury during adult infections. The sequence is that of External core antigen from Homo sapiens (Human).